The following is a 90-amino-acid chain: Probable Fe(2+)-trafficking protein (90 aa).

It belongs to the Fe(2+)-trafficking protein family.

In terms of biological role, could be a mediator in iron transactions between iron acquisition and iron-requiring processes, such as synthesis and/or repair of Fe-S clusters in biosynthetic enzymes. The polypeptide is Probable Fe(2+)-trafficking protein (Bordetella bronchiseptica (strain ATCC BAA-588 / NCTC 13252 / RB50) (Alcaligenes bronchisepticus)).